We begin with the raw amino-acid sequence, 82 residues long: Large ribosomal subunit protein uL23 (82 aa).

Belongs to the universal ribosomal protein uL23 family. As to quaternary structure, part of the 50S ribosomal subunit. Contacts protein L29.

Its function is as follows. Binds to 23S rRNA. One of the proteins that surrounds the polypeptide exit tunnel on the outside of the ribosome. The polypeptide is Large ribosomal subunit protein uL23 (Natronomonas pharaonis (strain ATCC 35678 / DSM 2160 / CIP 103997 / JCM 8858 / NBRC 14720 / NCIMB 2260 / Gabara) (Halobacterium pharaonis)).